We begin with the raw amino-acid sequence, 293 residues long: tRNA (guanine(9)-N1)-methyltransferase (293 aa).

The segment at 1–31 (MSNDEINQNEEKVKRTPPLPPVPEGMSKKQW) is disordered. Position 16 is a phosphothreonine (T16). A coiled-coil region spans residues 32 to 61 (KKMCKRQRWEENKAKYNAERRVKKKRLRHE). Residues 83–279 (EPRINVNQTD…SVLPPRKLDA (197 aa)) enclose the SAM-dependent MTase TRM10-type domain. Residues 186-187 (LT), G206, 210-214 (DKNRY), C218, L232, and 244-246 (RVL) each bind S-adenosyl-L-methionine. Residue D210 is the Proton acceptor of the active site. S283 is modified (phosphoserine).

It belongs to the class IV-like SAM-binding methyltransferase superfamily. TRM10 family. Monomer.

It localises to the cytoplasm. The protein localises to the nucleus. The enzyme catalyses guanosine(9) in tRNA + S-adenosyl-L-methionine = N(1)-methylguanosine(9) in tRNA + S-adenosyl-L-homocysteine + H(+). Functionally, S-adenosyl-L-methionine-dependent guanine N(1)-methyltransferase that catalyzes the formation of N(1)-methylguanine at position 9 (m1G9) in cytoplasmic tRNAs. The sequence is that of tRNA (guanine(9)-N1)-methyltransferase from Saccharomyces cerevisiae (strain ATCC 204508 / S288c) (Baker's yeast).